We begin with the raw amino-acid sequence, 159 residues long: Ribosomal RNA large subunit methyltransferase H (159 aa).

Residues Leu-76, Gly-107, and 126–131 (LSSLTL) each bind S-adenosyl-L-methionine.

It belongs to the RNA methyltransferase RlmH family. Homodimer.

The protein resides in the cytoplasm. It carries out the reaction pseudouridine(1915) in 23S rRNA + S-adenosyl-L-methionine = N(3)-methylpseudouridine(1915) in 23S rRNA + S-adenosyl-L-homocysteine + H(+). Specifically methylates the pseudouridine at position 1915 (m3Psi1915) in 23S rRNA. The sequence is that of Ribosomal RNA large subunit methyltransferase H from Cupriavidus necator (strain ATCC 17699 / DSM 428 / KCTC 22496 / NCIMB 10442 / H16 / Stanier 337) (Ralstonia eutropha).